Reading from the N-terminus, the 662-residue chain is A-kinase anchor protein 10, mitochondrial (662 aa).

Residues 1–28 (MRGAGPSPRQSPRTLRPDPGPAMSFFRR) constitute a mitochondrion transit peptide. The interval 1 to 55 (MRGAGPSPRQSPRTLRPDPGPAMSFFRRKVKGKEQEKTSDVKSIKASISVHSPQK) is disordered. Residues 32–43 (GKEQEKTSDVKS) show a composition bias toward basic and acidic residues. Phosphoserine is present on residues Ser-52 and Ser-189. 2 consecutive RGS domains span residues 125-369 (TLEQ…CKYQ) and 379-505 (YLAD…YKYL). Polar residues predominate over residues 261-280 (SMETQESSSTLTVASRNSPA). The segment at 261-282 (SMETQESSSTLTVASRNSPASP) is disordered. Phosphoserine is present on Ser-281. Residues 524 to 548 (LTAPGSVGPPDESHPGSSDSSASQS) form a disordered region. The tract at residues 634-647 (LAWKIAKMIVSDIM) is PKA-RII subunit binding.

It localises to the mitochondrion. The protein resides in the membrane. It is found in the cytoplasm. Functionally, differentially targeted protein that binds to type I and II regulatory subunits of protein kinase A and anchors them to the mitochondria or the plasma membrane. Although the physiological relevance between PKA and AKAPS with mitochondria is not fully understood, one idea is that BAD, a proapoptotic member, is phosphorylated and inactivated by mitochondria-anchored PKA. It cannot be excluded too that it may facilitate PKA as well as G protein signal transduction, by acting as an adapter for assembling multiprotein complexes. With its RGS domain, it could lead to the interaction to G-alpha proteins, providing a link between the signaling machinery and the downstream kinase. In Homo sapiens (Human), this protein is A-kinase anchor protein 10, mitochondrial (AKAP10).